A 113-amino-acid chain; its full sequence is Endoribonuclease SymE (113 aa).

In terms of domain architecture, SpoVT-AbrB spans 29-74 (SRYPDYSRIPAITLKGQWLEAAGFATGTAVDVKVMEGCIVLTAQPP).

It belongs to the SymE family.

It localises to the cytoplasm. In terms of biological role, involved in the degradation and recycling of damaged RNA. It is itself a target for degradation by the ATP-dependent protease Lon. This chain is Endoribonuclease SymE, found in Escherichia coli O6:K15:H31 (strain 536 / UPEC).